A 316-amino-acid chain; its full sequence is Beta-ketoacyl-[acyl-carrier-protein] synthase III 1 (316 aa).

Residues Cys-112 and His-243 contribute to the active site. The ACP-binding stretch occupies residues 244-248 (QANYR). Asn-273 is a catalytic residue.

The protein belongs to the thiolase-like superfamily. FabH family. As to quaternary structure, homodimer.

Its subcellular location is the cytoplasm. The catalysed reaction is malonyl-[ACP] + acetyl-CoA + H(+) = 3-oxobutanoyl-[ACP] + CO2 + CoA. It functions in the pathway lipid metabolism; fatty acid biosynthesis. In terms of biological role, catalyzes the condensation reaction of fatty acid synthesis by the addition to an acyl acceptor of two carbons from malonyl-ACP. Catalyzes the first condensation reaction which initiates fatty acid synthesis and may therefore play a role in governing the total rate of fatty acid production. Possesses both acetoacetyl-ACP synthase and acetyl transacylase activities. Its substrate specificity determines the biosynthesis of branched-chain and/or straight-chain of fatty acids. This Vibrio vulnificus (strain CMCP6) protein is Beta-ketoacyl-[acyl-carrier-protein] synthase III 1.